A 375-amino-acid chain; its full sequence is Adiponectin receptor protein 1 (375 aa).

The segment at 1–60 (MSSHKGSVVAQGNGAPASNREADTVELAELGPLLEEKGKRVIANPPKAEEEQTCPVPQEE) is disordered. Over 1–136 (MSSHKGSVVA…SIFRIHTETG (136 aa)) the chain is Cytoplasmic. Residues 137–157 (NIWTHLLGFVLFLFLGILTML) form a helical membrane-spanning segment. Residues 158 to 170 (RPNMYFMAPLQEK) lie on the Extracellular side of the membrane. A helical membrane pass occupies residues 171–191 (VVFGMFFLGAVLCLSFSWLFH). His-191 is a binding site for Zn(2+). Topologically, residues 192–203 (TVYCHSEKVSRT) are cytoplasmic. A helical transmembrane segment spans residues 204-224 (FSKLDYSGIALLIMGSFVPWL). The Extracellular segment spans residues 225 to 234 (YYSFYCSPQP). The chain crosses the membrane as a helical span at residues 235–255 (RLIYLSIVCVLGISAIIVAQW). Topologically, residues 256-264 (DRFATPKHR) are cytoplasmic. A helical transmembrane segment spans residues 265–285 (QTRAGVFLGLGLSGVVPTMHF). The Extracellular segment spans residues 286–298 (TIAEGFVKATTVG). The chain crosses the membrane as a helical span at residues 299 to 319 (QMGWFFLMAVMYITGAGLYAA). Topologically, residues 320–337 (RIPERFFPGKFDIWFQSH) are cytoplasmic. The Zn(2+) site is built by His-337 and His-341. A helical transmembrane segment spans residues 338–358 (QIFHVLVVAAAFVHFYGVSNL). Over 359–375 (QEFRYGLEGGCTDDTLL) the chain is Extracellular.

It belongs to the ADIPOR family. In terms of assembly, may form homooligomers and heterooligomers with ADIPOR2. Interacts with APPL2 (via BAR domain); hinders the accessibility of APPL1 to ADIPOR1; negatively regulates adiponectin signaling; ADIPOQ dissociates this interaction and facilitates the recruitment of APPL1 to ADIPOR1. Interacts with APPL1; ADIPOQ enhances this interaction; inhibites adiponectin-stimulated binding of APPL2 to ADIPOR1. Widely expressed. Highly expressed in heart and skeletal muscle. Expressed at intermediate level in brain, spleen, kidney, liver, placenta, lung and peripheral blood leukocytes. Weakly expressed in colon, thymus and small intestine.

It localises to the cell membrane. In terms of biological role, receptor for ADIPOQ, an essential hormone secreted by adipocytes that regulates glucose and lipid metabolism. Required for normal glucose and fat homeostasis and for maintaining a normal body weight. ADIPOQ-binding activates a signaling cascade that leads to increased AMPK activity, and ultimately to increased fatty acid oxidation, increased glucose uptake and decreased gluconeogenesis. Has high affinity for globular adiponectin and low affinity for full-length adiponectin. The protein is Adiponectin receptor protein 1 of Homo sapiens (Human).